The primary structure comprises 434 residues: Enolase (434 aa).

Positions 29-56 are disordered; that stretch reads SGHTGRAAVPSGASTGSREALEMRDGDK. The segment covering 47–56 has biased composition (basic and acidic residues); that stretch reads EALEMRDGDK. Gln163 is a binding site for (2R)-2-phosphoglycerate. Catalysis depends on Glu205, which acts as the Proton donor. Mg(2+)-binding residues include Asp242, Glu285, and Asp312. Positions 337, 366, 367, and 388 each coordinate (2R)-2-phosphoglycerate. Lys337 functions as the Proton acceptor in the catalytic mechanism.

Belongs to the enolase family. In terms of assembly, homooctamer. Requires Mg(2+) as cofactor.

It localises to the cytoplasm. Its subcellular location is the secreted. The protein resides in the cell surface. It catalyses the reaction (2R)-2-phosphoglycerate = phosphoenolpyruvate + H2O. It functions in the pathway carbohydrate degradation; glycolysis; pyruvate from D-glyceraldehyde 3-phosphate: step 4/5. In terms of biological role, catalyzes the reversible conversion of 2-phosphoglycerate (2-PG) into phosphoenolpyruvate (PEP). It is essential for the degradation of carbohydrates via glycolysis. The sequence is that of Enolase from Nitratidesulfovibrio vulgaris (strain DSM 19637 / Miyazaki F) (Desulfovibrio vulgaris).